The following is a 596-amino-acid chain: Elongation factor 4 (596 aa).

A tr-type G domain is found at 2–183; sequence KNIRNFSIIA…AIITRIPAPN (182 aa). Residues 14-19 and 130-133 contribute to the GTP site; these read DHGKST and NKID.

Belongs to the TRAFAC class translation factor GTPase superfamily. Classic translation factor GTPase family. LepA subfamily.

The protein resides in the cell inner membrane. It carries out the reaction GTP + H2O = GDP + phosphate + H(+). Functionally, required for accurate and efficient protein synthesis under certain stress conditions. May act as a fidelity factor of the translation reaction, by catalyzing a one-codon backward translocation of tRNAs on improperly translocated ribosomes. Back-translocation proceeds from a post-translocation (POST) complex to a pre-translocation (PRE) complex, thus giving elongation factor G a second chance to translocate the tRNAs correctly. Binds to ribosomes in a GTP-dependent manner. The polypeptide is Elongation factor 4 (Campylobacter concisus (strain 13826)).